Reading from the N-terminus, the 435-residue chain is Tol-Pal system protein TolB (435 aa).

An N-terminal signal peptide occupies residues 1–26 (MKIFSPIRLVLAIAALMSVFSAPAFA).

This sequence belongs to the TolB family. In terms of assembly, the Tol-Pal system is composed of five core proteins: the inner membrane proteins TolA, TolQ and TolR, the periplasmic protein TolB and the outer membrane protein Pal. They form a network linking the inner and outer membranes and the peptidoglycan layer.

The protein resides in the periplasm. Part of the Tol-Pal system, which plays a role in outer membrane invagination during cell division and is important for maintaining outer membrane integrity. This Agrobacterium fabrum (strain C58 / ATCC 33970) (Agrobacterium tumefaciens (strain C58)) protein is Tol-Pal system protein TolB.